We begin with the raw amino-acid sequence, 340 residues long: Guanine nucleotide-binding protein G(I)/G(S)/G(T) subunit beta-3 (340 aa).

WD repeat units follow at residues 53–83 (GHLA…IVWD), 95–125 (LRSS…SIYS), 141–170 (AHTG…ALWD), 182–212 (GHTG…KLWD), 224–254 (GHES…RLFD), 268–298 (SIIC…NVWD), and 310–340 (GHDN…KIWN).

It belongs to the WD repeat G protein beta family. G proteins are composed of 3 units, alpha, beta and gamma. Interacts with RASD2. As to expression, expressed at a high level in the heart and at a much lower level in the brain.

Guanine nucleotide-binding proteins (G proteins) are involved as a modulator or transducer in various transmembrane signaling systems. The beta and gamma chains are required for the GTPase activity, for replacement of GDP by GTP, and for G protein-effector interaction. The protein is Guanine nucleotide-binding protein G(I)/G(S)/G(T) subunit beta-3 (Gnb3) of Rattus norvegicus (Rat).